The sequence spans 243 residues: Epoxyqueuosine reductase QueH (243 aa).

The segment covering 1-16 (MHRTKLEQKQPHFDAQ) has biased composition (basic and acidic residues). A disordered region spans residues 1–30 (MHRTKLEQKQPHFDAQKRRKKECKNSNTPF). 4 residues coordinate [4Fe-4S] cluster: Cys49, Cys50, Cys128, and Cys131. Cys211 and Cys213 are joined by a disulfide.

It belongs to the QueH family.

The catalysed reaction is epoxyqueuosine(34) in tRNA + AH2 = queuosine(34) in tRNA + A + H2O. Its pathway is tRNA modification; tRNA-queuosine biosynthesis. In terms of biological role, catalyzes the conversion of epoxyqueuosine (oQ) to queuosine (Q), which is a hypermodified base found in the wobble positions of tRNA(Asp), tRNA(Asn), tRNA(His) and tRNA(Tyr). This chain is Epoxyqueuosine reductase QueH, found in Histophilus somni (strain 129Pt) (Haemophilus somnus).